We begin with the raw amino-acid sequence, 498 residues long: Glutamyl-tRNA(Gln) amidotransferase subunit A (498 aa).

Catalysis depends on charge relay system residues lysine 80 and serine 155. Positions 132-159 (SSTENSAYGPTRNPWDTDRVPGGSSGGS) are disordered. Serine 179 (acyl-ester intermediate) is an active-site residue.

It belongs to the amidase family. GatA subfamily. Heterotrimer of A, B and C subunits.

The enzyme catalyses L-glutamyl-tRNA(Gln) + L-glutamine + ATP + H2O = L-glutaminyl-tRNA(Gln) + L-glutamate + ADP + phosphate + H(+). Allows the formation of correctly charged Gln-tRNA(Gln) through the transamidation of misacylated Glu-tRNA(Gln) in organisms which lack glutaminyl-tRNA synthetase. The reaction takes place in the presence of glutamine and ATP through an activated gamma-phospho-Glu-tRNA(Gln). The polypeptide is Glutamyl-tRNA(Gln) amidotransferase subunit A (Thermobifida fusca (strain YX)).